The primary structure comprises 319 residues: NADH-cytochrome b5 reductase 2 (319 aa).

The chain crosses the membrane as a helical span at residues 30–46; it reads LAPVYLTVGLAGLGVGL. Positions 69 to 173 constitute an FAD-binding FR-type domain; sequence QGWVDLKLSE…KGPLPKYPWE (105 aa). 176 to 211 provides a ligand contact to FAD; the sequence is KHQHICLIAGGTGITPMYQLARHIFKNPEDKTKVTL.

Belongs to the flavoprotein pyridine nucleotide cytochrome reductase family. FAD is required as a cofactor.

It is found in the mitochondrion outer membrane. The catalysed reaction is 2 Fe(III)-[cytochrome b5] + NADH = 2 Fe(II)-[cytochrome b5] + NAD(+) + H(+). Its function is as follows. May mediate the reduction of outer membrane cytochrome b5. This Aspergillus terreus (strain NIH 2624 / FGSC A1156) protein is NADH-cytochrome b5 reductase 2 (mcr1).